The following is a 353-amino-acid chain: F-box protein At3g58530 (353 aa).

One can recognise an F-box; degenerate domain in the interval 8–56; it reads EEEEETWRREIVTSVMRLVSTRLPQTDLISLLLVSPWLYRTLISYPSIW.

This chain is F-box protein At3g58530, found in Arabidopsis thaliana (Mouse-ear cress).